We begin with the raw amino-acid sequence, 936 residues long: Periplasmic nitrate reductase (936 aa).

The segment at residues 1 to 31 (MALSRRDFLKSSAAAAAASAVGLSVPKEVEA) is a signal peptide (tat-type signal). A 4Fe-4S Mo/W bis-MGD-type domain is found at 40 to 96 (WRWDKAVCRFCGTGCGIMIATKDDRIVAVKGDPLAPVNRGLNCIKGYFTAKIMYGAD). 4 residues coordinate [4Fe-4S] cluster: C47, C50, C54, and C82. Mo-bis(molybdopterin guanine dinucleotide) contacts are provided by residues K84, Q152, N177, C181, 214–221 (WGSNMAEM), 246–250 (STYTH), M424, Q428, N534, 559–560 (SD), K582, D609, and 826–835 (TGRVLEHWHS). Residue W902 coordinates substrate. N910 and K927 together coordinate Mo-bis(molybdopterin guanine dinucleotide).

This sequence belongs to the prokaryotic molybdopterin-containing oxidoreductase family. NasA/NapA/NarB subfamily. In terms of assembly, component of the periplasmic nitrate reductase NapAB complex composed of NapA and NapB. [4Fe-4S] cluster is required as a cofactor. Mo-bis(molybdopterin guanine dinucleotide) serves as cofactor. Predicted to be exported by the Tat system. The position of the signal peptide cleavage has not been experimentally proven.

The protein resides in the periplasm. The catalysed reaction is 2 Fe(II)-[cytochrome] + nitrate + 2 H(+) = 2 Fe(III)-[cytochrome] + nitrite + H2O. Catalytic subunit of the periplasmic nitrate reductase complex NapAB. Receives electrons from NapB and catalyzes the reduction of nitrate to nitrite. The chain is Periplasmic nitrate reductase from Nitratiruptor sp. (strain SB155-2).